The chain runs to 429 residues: Glutamate-1-semialdehyde 2,1-aminomutase 2 (429 aa).

Lysine 268 carries the post-translational modification N6-(pyridoxal phosphate)lysine.

It belongs to the class-III pyridoxal-phosphate-dependent aminotransferase family. HemL subfamily. Homodimer. It depends on pyridoxal 5'-phosphate as a cofactor.

It localises to the cytoplasm. The catalysed reaction is (S)-4-amino-5-oxopentanoate = 5-aminolevulinate. Its pathway is porphyrin-containing compound metabolism; protoporphyrin-IX biosynthesis; 5-aminolevulinate from L-glutamyl-tRNA(Glu): step 2/2. The polypeptide is Glutamate-1-semialdehyde 2,1-aminomutase 2 (Staphylococcus carnosus (strain TM300)).